Here is a 569-residue protein sequence, read N- to C-terminus: Oxygen-dependent choline dehydrogenase (569 aa).

9-38 (DYVIIGGGSAGSVLGNRLSEDKDKEVLVLE) contacts FAD. Residue His475 is the Proton acceptor of the active site.

It belongs to the GMC oxidoreductase family. Requires FAD as cofactor.

The enzyme catalyses choline + A = betaine aldehyde + AH2. It catalyses the reaction betaine aldehyde + NAD(+) + H2O = glycine betaine + NADH + 2 H(+). Its pathway is amine and polyamine biosynthesis; betaine biosynthesis via choline pathway; betaine aldehyde from choline (cytochrome c reductase route): step 1/1. Functionally, involved in the biosynthesis of the osmoprotectant glycine betaine. Catalyzes the oxidation of choline to betaine aldehyde and betaine aldehyde to glycine betaine at the same rate. The polypeptide is Oxygen-dependent choline dehydrogenase (Staphylococcus aureus (strain MSSA476)).